We begin with the raw amino-acid sequence, 602 residues long: Putative ankyrin repeat protein L100 (602 aa).

ANK repeat units follow at residues 133–162, 269–294, 295–324, 325–354, 355–384, 386–414, 416–444, 445–474, 476–504, 506–534, and 536–566; these read VLFY…SLIS, YLEK…KKSI, NKER…NINL, LKGT…DIHI, RDNA…DIHT, SSQA…DIRS, ENIL…DVLS, KGVE…DICA, DNEA…DVKA, DNEA…DITA, and NNEA…DVHA.

The protein is Putative ankyrin repeat protein L100 of Acanthamoeba polyphaga mimivirus (APMV).